Consider the following 709-residue polypeptide: Polyribonucleotide nucleotidyltransferase (709 aa).

Residues Asp-487 and Asp-493 each contribute to the Mg(2+) site. One can recognise a KH domain in the interval 554–613 (PRIHTMKISSDKIKDVIGKGGAVIRALCEETGTTIEIEDDGTIKIAATEGAAAKEAIRRI). Positions 623–691 (GKIYTGKVMR…RQGRIRLSIK (69 aa)) constitute an S1 motif domain.

This sequence belongs to the polyribonucleotide nucleotidyltransferase family. Component of the RNA degradosome, which is a multiprotein complex involved in RNA processing and mRNA degradation. Mg(2+) is required as a cofactor.

The protein localises to the cytoplasm. It catalyses the reaction RNA(n+1) + phosphate = RNA(n) + a ribonucleoside 5'-diphosphate. In terms of biological role, involved in mRNA degradation. Catalyzes the phosphorolysis of single-stranded polyribonucleotides processively in the 3'- to 5'-direction. This Aliivibrio fischeri (strain MJ11) (Vibrio fischeri) protein is Polyribonucleotide nucleotidyltransferase.